The following is a 402-amino-acid chain: Zinc finger protein 322 (402 aa).

The C2H2-type 1; atypical zinc-finger motif lies at tyrosine 43–histidine 65. 8 C2H2-type zinc fingers span residues tyrosine 71–histidine 93, tyrosine 99–histidine 121, tyrosine 127–histidine 149, tyrosine 155–histidine 177, phenylalanine 183–histidine 205, tyrosine 211–histidine 233, tyrosine 239–histidine 261, and tyrosine 267–histidine 289. Residues phenylalanine 293–histidine 315 form a C2H2-type 10; degenerate zinc finger. Residues tyrosine 351–histidine 373 form a C2H2-type 11; degenerate zinc finger. Position 391 is a phosphoserine (serine 391).

Belongs to the krueppel C2H2-type zinc-finger protein family. Interacts with POU5F1. In terms of tissue distribution, ubiquitous. Highly expressed in heart and skeletal muscle.

It localises to the cytoplasm. The protein localises to the nucleus. Functionally, transcriptional activator. Important for maintenance of pluripotency in embryonic stem cells. Binds directly to the POU5F1 distal enhancer and the NANOG proximal promoter, and enhances expression of both genes. Can also bind to numerous other gene promoters and regulates expression of many other pluripotency factors, either directly or indirectly. Promotes inhibition of MAPK signaling during embryonic stem cell differentiation. The chain is Zinc finger protein 322 (ZNF322) from Homo sapiens (Human).